Here is a 267-residue protein sequence, read N- to C-terminus: Phosphatidylglycerol--prolipoprotein diacylglyceryl transferase (267 aa).

4 helical membrane-spanning segments follow: residues 10–30, 54–74, 90–110, and 116–136; these read VAIALGPFKVHWYGLMYVVGF, LLFYGALGVVLGGRVGYALFY, WDGGMSFHGGLIGVLIAAWLF, and LAFFQLTDFVAPLVPLGLGAG. Residue R137 participates in a 1,2-diacyl-sn-glycero-3-phospho-(1'-sn-glycerol) binding. 3 helical membrane passes run 169-189, 197-217, and 231-251; these read PSPLYEFALEGVVMFVVLWWV, GMISGLFLLLYAVFRFSVEFV, and WLTMGQLLTVPMALAGIALCV.

It belongs to the Lgt family.

The protein resides in the cell inner membrane. It carries out the reaction L-cysteinyl-[prolipoprotein] + a 1,2-diacyl-sn-glycero-3-phospho-(1'-sn-glycerol) = an S-1,2-diacyl-sn-glyceryl-L-cysteinyl-[prolipoprotein] + sn-glycerol 1-phosphate + H(+). It functions in the pathway protein modification; lipoprotein biosynthesis (diacylglyceryl transfer). In terms of biological role, catalyzes the transfer of the diacylglyceryl group from phosphatidylglycerol to the sulfhydryl group of the N-terminal cysteine of a prolipoprotein, the first step in the formation of mature lipoproteins. This is Phosphatidylglycerol--prolipoprotein diacylglyceryl transferase from Chromohalobacter salexigens (strain ATCC BAA-138 / DSM 3043 / CIP 106854 / NCIMB 13768 / 1H11).